A 363-amino-acid polypeptide reads, in one-letter code: D(1) dopamine receptor (363 aa).

Topologically, residues 1–24 are extracellular; the sequence is MAVLDLNLTTVIDSGFMESDRSVR. Asn-7 carries an N-linked (GlcNAc...) asparagine glycan. A helical transmembrane segment spans residues 25 to 45; sequence VLTGCFLSVLILSTLLGNTLV. At 46-61 the chain is on the cytoplasmic side; it reads CAAVTKFRHLRSKVTN. Residues 62–81 traverse the membrane as a helical segment; it reads FFVISLAVSDLLVAVLVMPW. Residues 82–98 lie on the Extracellular side of the membrane; that stretch reads KAVTEVAGFWPFGAFCD. A disulfide bond links Cys-97 and Cys-187. A helical transmembrane segment spans residues 99–120; the sequence is IWVAFDIMCSTASILNLCVISV. At 121 to 139 the chain is on the cytoplasmic side; that stretch reads DRYWAISSPFRYERKMTPR. The chain crosses the membrane as a helical span at residues 140-164; the sequence is VAFVMISGAWTLSVLISFIPVQLKW. The Extracellular portion of the chain corresponds to 165-194; that stretch reads HKAQPIGFLEVNASRRDLPTDNCDSSLNRT. Residues 195–219 traverse the membrane as a helical segment; sequence YAISSSLISFYIPVAIMIVTYTQIY. The Cytoplasmic portion of the chain corresponds to 220–271; it reads RIAQKQIRRISALERAAESAQIRHDSMGSGSNMDLESSFKLSFKRETKVLKT. The chain crosses the membrane as a helical span at residues 272–297; the sequence is LSVIMGVFVCCWLPFFILNCMVPFCK. Residues 298 to 310 are Extracellular-facing; sequence RTSNGLPCISPTT. The helical transmembrane segment at 311–330 threads the bilayer; sequence FDVFVWFGWANSSLNPIIYA. The Cytoplasmic segment spans residues 331 to 363; sequence FNADFRRAFAILLGCQRLCPGSISMETPSLNKN. The S-palmitoyl cysteine moiety is linked to residue Cys-345.

This sequence belongs to the G-protein coupled receptor 1 family. As to expression, retina.

The protein localises to the cell membrane. The protein resides in the cell projection. It localises to the cilium membrane. Dopamine receptor whose activity is mediated by G proteins which activate adenylyl cyclase. Could be involved in growth hormone release. In Carassius auratus (Goldfish), this protein is D(1) dopamine receptor.